The primary structure comprises 376 residues: Glucose-1-phosphate adenylyltransferase (376 aa).

Alpha-D-glucose 1-phosphate-binding positions include tyrosine 101, glycine 166, 181–182 (EK), and serine 192.

This sequence belongs to the bacterial/plant glucose-1-phosphate adenylyltransferase family. Homotetramer.

It catalyses the reaction alpha-D-glucose 1-phosphate + ATP + H(+) = ADP-alpha-D-glucose + diphosphate. Its pathway is glycan biosynthesis; glycogen biosynthesis. Involved in the biosynthesis of ADP-glucose, a building block required for the elongation reactions to produce glycogen. Catalyzes the reaction between ATP and alpha-D-glucose 1-phosphate (G1P) to produce pyrophosphate and ADP-Glc. This chain is Glucose-1-phosphate adenylyltransferase, found in Bacillus cereus (strain ATCC 10987 / NRS 248).